The chain runs to 213 residues: ATP-dependent dethiobiotin synthetase BioD (213 aa).

ATP is bound at residue 13–18; it reads GIGKTV. Thr17 provides a ligand contact to Mg(2+). Lys33 is an active-site residue. Residue Glu100 coordinates Mg(2+). ATP is bound by residues 100-103 and 184-186; these read EGAG and PHL.

Belongs to the dethiobiotin synthetase family. In terms of assembly, homodimer. It depends on Mg(2+) as a cofactor.

It localises to the cytoplasm. It catalyses the reaction (7R,8S)-7,8-diammoniononanoate + CO2 + ATP = (4R,5S)-dethiobiotin + ADP + phosphate + 3 H(+). The protein operates within cofactor biosynthesis; biotin biosynthesis; biotin from 7,8-diaminononanoate: step 1/2. Its function is as follows. Catalyzes a mechanistically unusual reaction, the ATP-dependent insertion of CO2 between the N7 and N8 nitrogen atoms of 7,8-diaminopelargonic acid (DAPA, also called 7,8-diammoniononanoate) to form a ureido ring. This is ATP-dependent dethiobiotin synthetase BioD from Rhodopseudomonas palustris (strain BisA53).